The following is a 179-amino-acid chain: Lebocin-4 (179 aa).

Positions 1–16 (MYKFLVFSSVLVLFFA) are cleaved as a signal peptide. A propeptide spanning residues 17–120 (QASCQRFIQP…RPIESHRNTR (104 aa)) is cleaved from the precursor. O-linked (GalNAc...) threonine glycosylation is present at T135. A propeptide spanning residues 153–179 (RRHASDDQEELRHHNEHFLIPRDILQD) is cleaved from the precursor.

The protein belongs to the lebocin family. Post-translationally, O-glycosylation is important for the antibacterial activity of lebocin. As to expression, hemolymph. Produced in fat body.

The protein localises to the secreted. In terms of biological role, antibacterial peptide. This chain is Lebocin-4 (LEB4), found in Bombyx mori (Silk moth).